Here is a 33-residue protein sequence, read N- to C-terminus: Dermaseptin-H6 (33 aa).

Leucine amide is present on L33.

As to expression, expressed by the skin glands.

It localises to the secreted. Has antimicrobial activity. The polypeptide is Dermaseptin-H6 (Pithecopus hypochondrialis (Orange-legged leaf frog)).